The following is a 115-amino-acid chain: U3-lycotoxin-Ls1c (115 aa).

An N-terminal signal peptide occupies residues 1–20; that stretch reads MKFVLLFGVLLVTLFSYSSA. The propeptide occupies 21–44; that stretch reads EMLDDFDQADEDELLSLIEKEEAR. 4 disulfide bridges follow: C48-C63, C55-C72, C62-C87, and C74-C85.

This sequence belongs to the neurotoxin 19 (CSTX) family. 01 subfamily. In terms of tissue distribution, expressed by the venom gland.

Its subcellular location is the secreted. This chain is U3-lycotoxin-Ls1c, found in Lycosa singoriensis (Wolf spider).